A 135-amino-acid polypeptide reads, in one-letter code: Lymphocyte antigen 6 complex locus protein G6d (135 aa).

A signal peptide spans 1–19; it reads MNSQLVGILLSALLGVALG. In terms of domain architecture, UPAR/Ly6 spans 22-121; it reads TRCYDCGGGP…ASSVTPLCIL (100 aa). 5 cysteine pairs are disulfide-bonded: Cys-24–Cys-48, Cys-27–Cys-35, Cys-42–Cys-76, Cys-82–Cys-101, and Cys-102–Cys-107. Thr-68 carries O-linked (GalNAc...) threonine glycosylation. Residue Asn-108 is the site of GPI-anchor amidated asparagine attachment. The propeptide at 109–135 is removed in mature form; that stretch reads SAVASSVTPLCILAAAVTTLAWLLPGL.

As to quaternary structure, homodimer. Post-translationally, O-glycosylated. Expressed in embryonic tissue and adult lung, kidney, brain, liver and spleen.

The protein localises to the cell membrane. It is found in the cell projection. The protein resides in the filopodium. In Mus musculus (Mouse), this protein is Lymphocyte antigen 6 complex locus protein G6d (Ly6g6d).